A 139-amino-acid polypeptide reads, in one-letter code: Histone H2AX (139 aa).

Residues 1–24 form a disordered region; sequence MSSTATTKGGRGKPKASKSVSRSS. Ser-136 carries the post-translational modification Phosphoserine; by ATM and ATR. The short motif at 136-137 is the [ST]-Q motif element; the sequence is SQ.

The protein belongs to the histone H2A family. As to quaternary structure, the nucleosome is a histone octamer containing two molecules each of H2A, H2B, H3 and H4 assembled in one H3-H4 heterotetramer and two H2A-H2B heterodimers. The octamer wraps approximately 147 bp of DNA. Interacts with numerous proteins required for DNA damage signaling and repair when phosphorylated on Ser-136. Post-translationally, phosphorylated on Ser-136 (to form gamma-H2AX) in response to DNA double strand breaks (DSBs) generated by exogenous genotoxic agents and by stalled replication forks, and may also occur during meiotic recombination events. Phosphorylation can extend up to several thousand nucleosomes from the actual site of the DSB and may mark the surrounding chromatin for recruitment of proteins required for DNA damage signaling and repair. Widespread phosphorylation may also serve to amplify the damage signal or aid repair of persistent lesions. Phosphorylation of Ser-136 in response to ionizing radiation is mediated by ATM while defects in DNA replication induce Ser-136 phosphorylation subsequent to activation of ATR. Dephosphorylation of Ser-136 by PP2A is required for DNA DSB repair.

The protein localises to the nucleus. Its subcellular location is the chromosome. In terms of biological role, variant histone H2A which replaces conventional H2A in a subset of nucleosomes. Nucleosomes wrap and compact DNA into chromatin, limiting DNA accessibility to the cellular machineries which require DNA as a template. Histones thereby play a central role in transcription regulation, DNA repair, DNA replication and chromosomal stability. DNA accessibility is regulated via a complex set of post-translational modifications of histones, also called histone code, and nucleosome remodeling. Required for checkpoint-mediated arrest of cell cycle progression in response to low doses of ionizing radiation and for efficient repair of DNA double strand breaks (DSBs) specifically when modified by C-terminal phosphorylation. The polypeptide is Histone H2AX (HIS2A) (Cicer arietinum (Chickpea)).